Here is a 393-residue protein sequence, read N- to C-terminus: Dual specificity mitogen-activated protein kinase kinase 1 (393 aa).

Residues 1 to 27 (MPKKKPTPIQLNPAPDGSAVNGTSSAE) form a disordered region. Residues 68–361 (FEKISELGAG…LKQLMVHAFI (294 aa)) enclose the Protein kinase domain. ATP-binding positions include 74 to 82 (LGAGNGGVV) and lysine 97. Aspartate 190 functions as the Proton acceptor in the catalytic mechanism. Serine 218 and serine 222 each carry phosphoserine; by RAF. Residues 270–307 (ELELLFGCHVEGDAAETPPRPRTPGRPLSSYGMDSRPP) are RAF1-binding. At threonine 286 the chain carries Phosphothreonine. Phosphothreonine; by MAPK1 is present on threonine 292. Serine 298 bears the Phosphoserine; by PAK mark.

It belongs to the protein kinase superfamily. STE Ser/Thr protein kinase family. MAP kinase kinase subfamily. As to quaternary structure, found in a complex with at least BRAF, HRAS, MAP2K1, MAPK3/ERK1 and RGS14. Forms a heterodimer with MAP2K2/MEK2. Forms heterodimers with KSR2 which further dimerize to form tetramers. Interacts with KSR1 or KSR2 and BRAF; the interaction with KSR1 or KSR2 mediates KSR1-BRAF or KSR2-BRAF dimerization. Interacts with ARBB2, LAMTOR3, MAPK1/ERK2 and RAF1. Interacts with MAPK1/ERK2. Interacts with MORG1. Interacts with PPARG. Interacts with SGK1. Interacts with BIRC6/bruce. Interacts with KAT7; the interaction promotes KAT7 phosphorylation. Interacts with RAF1 and NEK10; the interaction is required for ERK1/2-signaling pathway activation in response to UV irradiation. Interacts with TRAF3IP3. Interacts with MOS. Phosphorylation at Ser-218 and Ser-222 by MAP kinase kinase kinases (BRAF or MEKK1) positively regulates kinase activity. Also phosphorylated at Thr-292 by MAPK1/ERK2 and at Ser-298 by PAK. MAPK1/ERK2 phosphorylation of Thr-292 occurs in response to cellular adhesion and leads to inhibition of Ser-298 phosphorylation by PAK. Autophosphorylated at Ser-218 and Ser-222, autophosphosphorylation is promoted by NEK10 following UV irradiation.

The protein localises to the cytoplasm. It is found in the cytoskeleton. Its subcellular location is the microtubule organizing center. The protein resides in the centrosome. It localises to the spindle pole body. The protein localises to the nucleus. It is found in the membrane. The enzyme catalyses L-seryl-[protein] + ATP = O-phospho-L-seryl-[protein] + ADP + H(+). The catalysed reaction is L-threonyl-[protein] + ATP = O-phospho-L-threonyl-[protein] + ADP + H(+). It catalyses the reaction L-tyrosyl-[protein] + ATP = O-phospho-L-tyrosyl-[protein] + ADP + H(+). Its activity is regulated as follows. Ras proteins such as HRAS mediate the activation of RAF proteins such as RAF1 or BRAF which in turn activate extracellular signal-regulated kinases (ERK) through MAPK (mitogen-activated protein kinases) and ERK kinases MAP2K1/MEK1 and MAP2K2/MEK2. Activation occurs through phosphorylation of Ser-218 and Ser-222. MAP2K1/MEK1 binds KSR1 or KSR2 releasing the inhibitory intramolecular interaction between KSR1 or KSR2 protein kinase and N-terminal domains. This allows KSR1 or KSR2 dimerization with BRAF leading to BRAF activation and phosphorylation of MAP2K1. MAP2K1/MEK1 is also the target of negative feed-back regulation by its substrate kinases, such as MAPK1/ERK2. These phosphorylate MAP2K1/MEK1 on Thr-292, thereby facilitating dephosphorylation of the activating residues Ser-218 and Ser-222. Inhibited by serine/threonine phosphatase 2A. In terms of biological role, dual specificity protein kinase which acts as an essential component of the MAP kinase signal transduction pathway. Binding of extracellular ligands such as growth factors, cytokines and hormones to their cell-surface receptors activates RAS and this initiates RAF1 activation. RAF1 then further activates the dual-specificity protein kinases MAP2K1/MEK1 and MAP2K2/MEK2. Both MAP2K1/MEK1 and MAP2K2/MEK2 function specifically in the MAPK/ERK cascade, and catalyze the concomitant phosphorylation of a threonine and a tyrosine residue in a Thr-Glu-Tyr sequence located in the extracellular signal-regulated kinases MAPK3/ERK1 and MAPK1/ERK2, leading to their activation and further transduction of the signal within the MAPK/ERK cascade. Activates BRAF in a KSR1 or KSR2-dependent manner; by binding to KSR1 or KSR2 releases the inhibitory intramolecular interaction between KSR1 or KSR2 protein kinase and N-terminal domains which promotes KSR1 or KSR2-BRAF dimerization and BRAF activation. Depending on the cellular context, this pathway mediates diverse biological functions such as cell growth, adhesion, survival and differentiation, predominantly through the regulation of transcription, metabolism and cytoskeletal rearrangements. One target of the MAPK/ERK cascade is peroxisome proliferator-activated receptor gamma (PPARG), a nuclear receptor that promotes differentiation and apoptosis. MAP2K1/MEK1 has been shown to export PPARG from the nucleus. The MAPK/ERK cascade is also involved in the regulation of endosomal dynamics, including lysosome processing and endosome cycling through the perinuclear recycling compartment (PNRC), as well as in the fragmentation of the Golgi apparatus during mitosis. The sequence is that of Dual specificity mitogen-activated protein kinase kinase 1 (Map2k1) from Mus musculus (Mouse).